The following is a 191-amino-acid chain: LOB domain-containing protein 19 (191 aa).

The 103-residue stretch at 15–117 (GPCGACKFLR…AELAHVQARL (103 aa)) folds into the LOB domain.

This sequence belongs to the LOB domain-containing protein family. In terms of tissue distribution, expressed in shoots, roots and floral tissues, but not in stems or leaves.

This Arabidopsis thaliana (Mouse-ear cress) protein is LOB domain-containing protein 19 (LBD19).